Reading from the N-terminus, the 310-residue chain is Ribose-phosphate pyrophosphokinase (310 aa).

ATP is bound by residues 34–36 (DQE) and 93–94 (RQ). Mg(2+) is bound by residues histidine 127 and aspartate 167. Lysine 190 is an active-site residue. Residues arginine 192, aspartate 216, and 220-224 (DSGGT) each bind D-ribose 5-phosphate.

It belongs to the ribose-phosphate pyrophosphokinase family. Class I subfamily. Homohexamer. The cofactor is Mg(2+).

It is found in the cytoplasm. It catalyses the reaction D-ribose 5-phosphate + ATP = 5-phospho-alpha-D-ribose 1-diphosphate + AMP + H(+). It functions in the pathway metabolic intermediate biosynthesis; 5-phospho-alpha-D-ribose 1-diphosphate biosynthesis; 5-phospho-alpha-D-ribose 1-diphosphate from D-ribose 5-phosphate (route I): step 1/1. Involved in the biosynthesis of the central metabolite phospho-alpha-D-ribosyl-1-pyrophosphate (PRPP) via the transfer of pyrophosphoryl group from ATP to 1-hydroxyl of ribose-5-phosphate (Rib-5-P). This chain is Ribose-phosphate pyrophosphokinase, found in Rhizobium meliloti (strain 1021) (Ensifer meliloti).